Here is a 535-residue protein sequence, read N- to C-terminus: Probable C4-dicarboxylate sensor kinase (535 aa).

Residues 1-11 (MNKKKLSIRWK) are Cytoplasmic-facing. The chain crosses the membrane as a helical span at residues 12–32 (ITILSYILVIFSFLIGGIVLI). Residues 33 to 172 (GNIQHTEERE…IADILLHLKR (140 aa)) are Extracellular-facing. A helical membrane pass occupies residues 173 to 193 (DIAFIVVLTLGFGLAGSFLLA). Topologically, residues 194–535 (RHIKKQMFQL…MKGEEAQHGS (342 aa)) are cytoplasmic. A PAS domain is found at 213–276 (EERTATFHSM…PEIVERNKAV (64 aa)). The region spanning 333–528 (VQNHEHMNKL…SFSIVFPMKG (196 aa)) is the Histidine kinase domain. At His336 the chain carries Phosphohistidine; by autocatalysis.

The protein localises to the cell membrane. The enzyme catalyses ATP + protein L-histidine = ADP + protein N-phospho-L-histidine.. Its function is as follows. Member of the two-component regulatory system DctS/DctR. Probably activates DctR by phosphorylation. Essential for expression of dctP. In Bacillus subtilis (strain 168), this protein is Probable C4-dicarboxylate sensor kinase (dctS).